The sequence spans 468 residues: UDP-N-acetylmuramoylalanine--D-glutamate ligase (468 aa).

ATP is bound at residue 117 to 123 (GTDGKTT).

It belongs to the MurCDEF family.

Its subcellular location is the cytoplasm. The enzyme catalyses UDP-N-acetyl-alpha-D-muramoyl-L-alanine + D-glutamate + ATP = UDP-N-acetyl-alpha-D-muramoyl-L-alanyl-D-glutamate + ADP + phosphate + H(+). It functions in the pathway cell wall biogenesis; peptidoglycan biosynthesis. In terms of biological role, cell wall formation. Catalyzes the addition of glutamate to the nucleotide precursor UDP-N-acetylmuramoyl-L-alanine (UMA). The sequence is that of UDP-N-acetylmuramoylalanine--D-glutamate ligase from Chloroherpeton thalassium (strain ATCC 35110 / GB-78).